A 478-amino-acid chain; its full sequence is Glutamyl-tRNA(Gln) amidotransferase subunit A (478 aa).

Residues K72 and S147 each act as charge relay system in the active site. The active-site Acyl-ester intermediate is S171.

This sequence belongs to the amidase family. GatA subfamily. In terms of assembly, heterotrimer of A, B and C subunits.

The enzyme catalyses L-glutamyl-tRNA(Gln) + L-glutamine + ATP + H2O = L-glutaminyl-tRNA(Gln) + L-glutamate + ADP + phosphate + H(+). Allows the formation of correctly charged Gln-tRNA(Gln) through the transamidation of misacylated Glu-tRNA(Gln) in organisms which lack glutaminyl-tRNA synthetase. The reaction takes place in the presence of glutamine and ATP through an activated gamma-phospho-Glu-tRNA(Gln). This chain is Glutamyl-tRNA(Gln) amidotransferase subunit A, found in Saccharolobus solfataricus (strain ATCC 35092 / DSM 1617 / JCM 11322 / P2) (Sulfolobus solfataricus).